The primary structure comprises 160 residues: Dysbindin domain-containing protein 1 (160 aa).

Phosphoserine is present on residues Ser-3, Ser-97, and Ser-121. Positions 95-160 (ADSDDENLAT…FLTVEEPKED (66 aa)) are disordered. Over residues 127–143 (TRAEQNREKQPPSDPER) the composition is skewed to basic and acidic residues.

The protein belongs to the dysbindin family.

This chain is Dysbindin domain-containing protein 1 (Dbndd1), found in Mus musculus (Mouse).